A 572-amino-acid polypeptide reads, in one-letter code: Proline--tRNA ligase (572 aa).

It belongs to the class-II aminoacyl-tRNA synthetase family. ProS type 1 subfamily. As to quaternary structure, homodimer.

The protein localises to the cytoplasm. The catalysed reaction is tRNA(Pro) + L-proline + ATP = L-prolyl-tRNA(Pro) + AMP + diphosphate. In terms of biological role, catalyzes the attachment of proline to tRNA(Pro) in a two-step reaction: proline is first activated by ATP to form Pro-AMP and then transferred to the acceptor end of tRNA(Pro). As ProRS can inadvertently accommodate and process non-cognate amino acids such as alanine and cysteine, to avoid such errors it has two additional distinct editing activities against alanine. One activity is designated as 'pretransfer' editing and involves the tRNA(Pro)-independent hydrolysis of activated Ala-AMP. The other activity is designated 'posttransfer' editing and involves deacylation of mischarged Ala-tRNA(Pro). The misacylated Cys-tRNA(Pro) is not edited by ProRS. This Salmonella arizonae (strain ATCC BAA-731 / CDC346-86 / RSK2980) protein is Proline--tRNA ligase.